The following is a 638-amino-acid chain: Cytoplasmic dynein 1 intermediate chain 2 (638 aa).

Basic and acidic residues-rich tracts occupy residues 1 to 13 and 20 to 43; these read MSDK…ELER and QIRE…KKEA. Disordered regions lie at residues 1–135 and 155–214; these read MSDK…GRGP and TYTK…EEKQ. S2 is modified (N-acetylserine). Residue S51 is modified to Diphosphoserine. 5 positions are modified to phosphoserine: S51, S73, W81, P84, and S90. The segment covering 88-97 has biased composition (low complexity); the sequence is PSSKSVSTPS. T95 is modified (phosphothreonine). A phosphoserine mark is found at S97, S101, and S104. Positions 190–214 are enriched in basic and acidic residues; that stretch reads EKTLKKDEENDSKAPPHELTEEEKQ. WD repeat units lie at residues 277-326, 330-370, 379-420, 429-469, 474-519, 522-562, and 568-607; these read SKHR…TTPE, HCQS…RTPV, AHTH…HPQD, SKAV…AGIS, GHQG…PLYS, DNAD…EVPT, and EGNP…AVPR.

It belongs to the dynein intermediate chain family. In terms of assembly, homodimer. The cytoplasmic dynein 1 complex consists of two catalytic heavy chains (HCs) and a number of non-catalytic subunits presented by intermediate chains (ICs), light intermediate chains (LICs) and light chains (LCs); the composition seems to vary in respect to the IC, LIC and LC composition. The heavy chain homodimer serves as a scaffold for the probable homodimeric assembly of the respective non-catalytic subunits. The ICs and LICs bind directly to the HC dimer and the LCs assemble on the IC dimer. Interacts with DYNLT3. Interacts with DYNLT1. Interacts (dephosphorylated at Ser-90) with DCTN1. Interacts with BICD2. Interacts with SPEF2. Interacts with CFAP61. (Microbial infection) Interacts with human adenovirus 5 hexon protein; this interaction probably allows virus intracellular transport. In terms of processing, the phosphorylation status of Ser-90 appears to be involved in dynactin-dependent target binding. Pyrophosphorylation by 5-diphosphoinositol pentakisphosphate (5-IP7) promotes interaction with DCTN1. Serine pyrophosphorylation is achieved by Mg(2+)-dependent, but enzyme independent transfer of a beta-phosphate from a inositol pyrophosphate to a pre-phosphorylated serine residue.

The protein localises to the cytoplasm. It is found in the cytoskeleton. Acts as one of several non-catalytic accessory components of the cytoplasmic dynein 1 complex that are thought to be involved in linking dynein to cargos and to adapter proteins that regulate dynein function. Cytoplasmic dynein 1 acts as a motor for the intracellular retrograde motility of vesicles and organelles along microtubules. The intermediate chains mediate the binding of dynein to dynactin via its 150 kDa component (p150-glued) DCTN1. Involved in membrane-transport, such as Golgi apparatus, late endosomes and lysosomes. This chain is Cytoplasmic dynein 1 intermediate chain 2, found in Homo sapiens (Human).